A 382-amino-acid polypeptide reads, in one-letter code: Probable purine permease 4 (382 aa).

The next 10 helical transmembrane spans lie at 25 to 45 (LTLL…SSLL), 62 to 82 (WVQS…HYVL), 98 to 118 (LIFS…FSWG), 121 to 141 (YLPV…TLIL), 150 to 170 (ITFS…LLAL), 185 to 205 (YFIG…YLPV), 224 to 244 (LVME…EGGF), 260 to 280 (TFYW…SFAA), 291 to 311 (ITGG…GVVA), and 315 to 335 (VFGG…SSYT). The region spanning 66–170 (AGFPLLLILI…LTLSSVLLAL (105 aa)) is the EamA domain. Residues 345-364 (EEKEKGEYSGVKTTEDSGEM) form a disordered region.

This sequence belongs to the purine permeases (TC 2.A.7.14) family.

It localises to the membrane. In Arabidopsis thaliana (Mouse-ear cress), this protein is Probable purine permease 4 (PUP4).